A 640-amino-acid chain; its full sequence is Serine/threonine-protein kinase ELM1 (640 aa).

A disordered region spans residues 27-47 (ELDSPPITPTSQTSSFGSSFS). Over residues 35-47 (PTSQTSSFGSSFS) the composition is skewed to low complexity. The Protein kinase domain occupies 88 to 420 (YTLGVSAGSG…PIDSRNHSQI (333 aa)). ATP-binding positions include 94 to 102 (AGSGQFGYV) and Lys-117. Ser-152 bears the Phosphoserine mark. Asp-259 acts as the Proton acceptor in catalysis. Residues Ser-516 and Ser-519 each carry the phosphoserine modification. Positions 520 to 529 (LPNLTVNNDK) are enriched in polar residues. 2 disordered regions span residues 520-547 (LPNL…HSSL) and 562-587 (SPKE…MDRT). Positions 530-541 (QNSDMKTDRSES) are enriched in basic and acidic residues. Positions 569–579 (RTHINCSQDKP) are enriched in polar residues.

The protein belongs to the protein kinase superfamily. Ser/Thr protein kinase family. Mg(2+) serves as cofactor.

It catalyses the reaction L-seryl-[protein] + ATP = O-phospho-L-seryl-[protein] + ADP + H(+). It carries out the reaction L-threonyl-[protein] + ATP = O-phospho-L-threonyl-[protein] + ADP + H(+). Important role in G1 events required for bud emergence and septin organization. Coordinates cell growth and cell division at G2/M, essential for efficient cytokinesis and for regulation of SWE1. This Saccharomyces cerevisiae (strain ATCC 204508 / S288c) (Baker's yeast) protein is Serine/threonine-protein kinase ELM1 (ELM1).